Consider the following 87-residue polypeptide: Large ribosomal subunit protein bL31B (87 aa).

The protein belongs to the bacterial ribosomal protein bL31 family. Type B subfamily. Part of the 50S ribosomal subunit.

The sequence is that of Large ribosomal subunit protein bL31B from Halorhodospira halophila (strain DSM 244 / SL1) (Ectothiorhodospira halophila (strain DSM 244 / SL1)).